The sequence spans 283 residues: E3 ubiquitin-protein ligase MARCHF5 (283 aa).

The RING-CH-type zinc finger occupies V9–V78. Positions 17, 20, 36, 38, 46, 49, 68, and 71 each coordinate Zn(2+). The next 4 membrane-spanning stretches (helical) occupy residues F102–V122, P142–I162, I212–S232, and T241–Q261.

The protein localises to the mitochondrion outer membrane. The protein resides in the endoplasmic reticulum membrane. The enzyme catalyses S-ubiquitinyl-[E2 ubiquitin-conjugating enzyme]-L-cysteine + [acceptor protein]-L-lysine = [E2 ubiquitin-conjugating enzyme]-L-cysteine + N(6)-ubiquitinyl-[acceptor protein]-L-lysine.. It functions in the pathway protein modification; protein ubiquitination. Mitochondrial E3 ubiquitin-protein ligase that plays a crucial role in the control of mitochondrial morphology by acting as a positive regulator of mitochondrial fission. May play a role in the prevention of cell senescence acting as a regulator of mitochondrial quality control. In Xenopus laevis (African clawed frog), this protein is E3 ubiquitin-protein ligase MARCHF5 (marchf5).